We begin with the raw amino-acid sequence, 356 residues long: Tyrosine recombinase XerS (356 aa).

The Core-binding (CB) domain maps to 16-121 (IMPWYVLDYY…ALSSLYKYLT (106 aa)). In terms of domain architecture, Tyr recombinase spans 169-354 (AFLDYVDKEY…VNDEQKNALD (186 aa)). Active-site residues include arginine 210, lysine 234, histidine 306, arginine 309, and histidine 332. Residue tyrosine 341 is the O-(3'-phospho-DNA)-tyrosine intermediate of the active site.

This sequence belongs to the 'phage' integrase family. XerS subfamily.

Its subcellular location is the cytoplasm. With respect to regulation, ftsK is required for recombination. Site-specific tyrosine recombinase, which acts by catalyzing the cutting and rejoining of the recombining DNA molecules. Essential to convert dimers of the bacterial chromosome into monomers to permit their segregation at cell division. The sequence is that of Tyrosine recombinase XerS from Streptococcus pyogenes serotype M2 (strain MGAS10270).